The chain runs to 161 residues: SsrA-binding protein (161 aa).

The protein belongs to the SmpB family.

The protein localises to the cytoplasm. In terms of biological role, required for rescue of stalled ribosomes mediated by trans-translation. Binds to transfer-messenger RNA (tmRNA), required for stable association of tmRNA with ribosomes. tmRNA and SmpB together mimic tRNA shape, replacing the anticodon stem-loop with SmpB. tmRNA is encoded by the ssrA gene; the 2 termini fold to resemble tRNA(Ala) and it encodes a 'tag peptide', a short internal open reading frame. During trans-translation Ala-aminoacylated tmRNA acts like a tRNA, entering the A-site of stalled ribosomes, displacing the stalled mRNA. The ribosome then switches to translate the ORF on the tmRNA; the nascent peptide is terminated with the 'tag peptide' encoded by the tmRNA and targeted for degradation. The ribosome is freed to recommence translation, which seems to be the essential function of trans-translation. This chain is SsrA-binding protein, found in Vibrio parahaemolyticus serotype O3:K6 (strain RIMD 2210633).